The primary structure comprises 1218 residues: MGESQSKQESNTRVAQHGSQQDVDPTFQTKRALERERSSPQVEQSFLGQLQSLLGWSSTSKDVPLSQLIREMDHESRRHSHQSKKKLDRSEHISEGTIPEIYEKRKETISHTQSMEQKYLFQNFTKLLLLQKCCPGGSEKLVRESWHPCVPEEGGHMIEIQDLFDPNLDTEKKPQLVIIEGAAGIGKSTLARQVKRAWDEGQLYRDRFQHVFFFSCRELAQCKQLSLAELIAQGQEVPTAPTRQILSRPEKLLFILDGIDEPAWVLEDQNPELCVHWSQAQPVHTLLGSLLGKSILPEASLMLTARTTALQKLVPSLGQPHRVEVLGFSEFERKDYFYKYFAKERNTIIDFNLIGSIPVLLTLCEVPWVCWLLCTCLEKQMQQGEVLSLTSQTTTALCLKYLSLTIPGQHLSTQLRTLCSLAAEGICQRRTLFSKSDLCKQGLAEDAIATFLKIGVLQRQPSSLSYSFAHLCLQEFFAAMSYILEDSEEAHGDMGNDRTVETLVERYGRQNLFEAPTVRFLLGLLNTREMREMENIFACKFPWETKLKLLQSIIGEPFCQPCHLGLFHCLYENQEEELLTETMLCFPLTASGPNHMEATVFQTNVKRLVIQTDMELMVVTFCITFSHVRSLRLKGKGQQEYKLTAPAMVLYRWTPISEASWKVLFSNLKCTRNLEELDLSGNPLSYSAVRSLCTALRQPGCRLKTLWLVDCGLTSRCCSFLASMLSAHSRLAELDLRLNDLGDNGVRQLCEGLRNPACNLSILRLDQASLSEQVITELRALETKNPKLFISSTWMSHMTMPTENTDGEESLTSSKQQQQQSGDKHMEPLGTDDDFWGPSGPVSTEVVDRERNLYRVRLPMAGSYHCPSTGLHFVVTRAVTIEIGFCAWSQFLHETPLQHSHMVAGPLFDIKAEHGAVTAVCLPHFVSLQEGKVDSSLFHVAHFQDHGMVLETPARVEPHFAVLENPSFSPMGVLLRMIPAVGHFIPITSITLIYYRLYLEDITFHLYLVPNDCTIRKAIDEEELKFQFVRINKPPPVDALYVGSRYIVSSSKEVEILPKELELCYRSPRESQLFSEIYVGNIGSGINLQLTDKKYMNLIWEALLKPGDLRPALPRMASAPKDAPALLHFVDQHREQLVARVTSVDPLLDKLHGLVLSEEDYETVRAEATNQDKMRKLFRGSRSWSWDCKDHFYQALKETHPHLIMDLLEKSGGVSVRL.

The span at 1 to 29 shows a compositional bias: polar residues; that stretch reads MGESQSKQESNTRVAQHGSQQDVDPTFQT. Disordered stretches follow at residues 1-44 and 71-91; these read MGES…QVEQ and EMDH…DRSE. A compositionally biased stretch (basic residues) spans 77-87; that stretch reads RRHSHQSKKKL. One can recognise an NACHT domain in the interval 175-484; it reads QLVIIEGAAG…EFFAAMSYIL (310 aa). Position 181 to 188 (181 to 188) interacts with ATP; sequence GAAGIGKS. 3 LRR repeats span residues 343–364, 673–693, and 730–750; these read KERN…LTLC, NLEE…RSLC, and RLAE…RQLC. Residues 799 to 815 are compositionally biased toward polar residues; the sequence is TMPTENTDGEESLTSSK. A disordered region spans residues 799–842; sequence TMPTENTDGEESLTSSKQQQQQSGDKHMEPLGTDDDFWGPSGPV. The tract at residues 835–968 is ZU5; the sequence is FWGPSGPVST…HFAVLENPSF (134 aa). The 284-residue stretch at 835–1118 folds into the FIIND domain; the sequence is FWGPSGPVST…LRPALPRMAS (284 aa). The interval 969-1118 is UPA; the sequence is SPMGVLLRMI…LRPALPRMAS (150 aa). Residues 1122–1211 form the CARD domain; the sequence is DAPALLHFVD…HLIMDLLEKS (90 aa).

The protein belongs to the NLRP family. As to quaternary structure, interacts (via LRR repeats) with BCL2 and BCL2L1 (via the loop between motifs BH4 and BH3). Interacts with NOD2; this interaction is enhanced in the presence of muramyl dipeptide (MDP) and increases IL1B release. Interacts with EIF2AK2/PKR; this interaction requires EIF2AK2 activity, is accompanied by EIF2AK2 autophosphorylation and promotes inflammasome assembly in response to danger-associated signals. Interacts with MEFV; this interaction targets Nlrp1a to degradation by autophagy, hence preventing excessive IL1B- and IL18-mediated inflammation. Interacts with DPP9; leading to inhibit activation of the inflammasome. DPP9 acts via formation of a ternary complex, composed of a DPP9 homodimer, one full-length NLRP1 protein, and one cleaved C-terminus of Nlrp1a (NACHT, LRR and PYD domains-containing protein 1a, C-terminus). Interacts with DPP8; leading to inhibit activation of the inflammasome, probably via formation of a ternary complex with DPP8. In terms of assembly, interacts with the C-terminal part of Nlrp1a (NACHT, LRR and PYD domains-containing protein 1a, C-terminus) in absence of pathogens and other damage-associated signals. Interacts with the N-terminal part of Nlrp1a (NACHT, LRR and PYD domains-containing protein 1a, N-terminus) in absence of pathogens and other damage-associated signals. Homomultimer; forms the Nlrp1a inflammasome polymeric complex, a filament composed of homopolymers of this form in response to pathogens and other damage-associated signals. The Nlrp1a inflammasome polymeric complex directly recruits pro-caspase-1 (proCASP1) independently of PYCARD/ASC. Interacts (via CARD domain) with CASP1 (via CARD domain); leading to CASP1 activation. In terms of processing, autocatalytically cleaved. Autocatalytic cleavage in FIIND region occurs constitutively, prior to activation signals, and is required for inflammasome activity (IL1B release), possibly by facilitating CASP1 binding. Both N- and C-terminal parts remain associated non-covalently. Post-translationally, ubiquitinated in response to pathogen-associated signals, leading to its degradation by the proteasome and subsequent release of the cleaved C-terminal part of the protein (NACHT, LRR and PYD domains-containing protein 1a, C-terminus), which polymerizes and forms the Nlrp1a inflammasome.

It is found in the cytoplasm. The protein localises to the cytosol. It localises to the nucleus. The protein resides in the inflammasome. With respect to regulation, activated by pathogens and other damage-associated signals: activation promotes ubiquitination and degradation of the N-terminal part, releasing the cleaved C-terminal part of the protein (NACHT, LRR and PYD domains-containing protein 1a, C-terminus), which polymerizes and forms the Nlrp1a inflammasome. Nlrp1a inflammasome is inhibited by DPP8 and DPP9, which sequester the C-terminal fragment of Nlrp1a (NACHT, LRR and PYD domains-containing protein 1a, C-terminus) in a ternary complex, thereby preventing Nlrp1a oligomerization and activation. Nlrp1a inflammasome is strongly activated by Val-boroPro (Talabostat, PT-100), an inhibitor of dipeptidyl peptidases DPP8 and DPP9. Val-boroPro relieves inhibition of DPP8 and/or DPP9 by promoting disruption of the ternary complex, releasing its C-terminal part from autoinhibition. Not activated by cleavage by B.anthracis lethal toxin (LT) endopeptidase. Functionally, acts as the sensor component of the Nlrp1a inflammasome, which mediates inflammasome activation in response to various pathogen-associated signals, leading to subsequent pyroptosis. Inflammasomes are supramolecular complexes that assemble in the cytosol in response to pathogens and other damage-associated signals and play critical roles in innate immunity and inflammation. Acts as a recognition receptor (PRR): recognizes specific pathogens and other damage-associated signals, such as Val-boroPro inhibitor, and mediates the formation of the inflammasome polymeric complex. In response to pathogen-associated signals, the N-terminal part of Nlrp1a is degraded by the proteasome, releasing the cleaved C-terminal part of the protein (NACHT, LRR and PYD domains-containing protein 1a, C-terminus), which polymerizes to initiate the formation of the inflammasome complex: the inflammasome directly recruits pro-caspase-1 (proCASP1) independently of PYCARD/ASC and promotes caspase-1 (CASP1) activation, which subsequently cleaves and activates inflammatory cytokines IL1B and IL18 and gasdermin-D (GSDMD), leading to pyroptosis. In the absence of GSDMD expression, the Nlrp1a inflammasome is able to recruit and activate CASP8, leading to activation of gasdermin-E (GSDME). Constitutes the precursor of the Nlrp1a inflammasome, which mediates autoproteolytic processing within the FIIND domain to generate the N-terminal and C-terminal parts, which are associated non-covalently in absence of pathogens and other damage-associated signals. In terms of biological role, regulatory part that prevents formation of the Nlrp1a inflammasome: in absence of pathogens and other damage-associated signals, interacts with the C-terminal part of Nlrp1a (NACHT, LRR and PYD domains-containing protein 1a, C-terminus), preventing activation of the Nlrp1a inflammasome. In response to pathogen-associated signals, this part is ubiquitinated by the N-end rule pathway and degraded by the proteasome, releasing the cleaved C-terminal part of the protein, which polymerizes and forms the Nlrp1a inflammasome. Its function is as follows. Constitutes the active part of the Nlrp1a inflammasome. In absence of pathogens and other damage-associated signals, interacts with the N-terminal part of Nlrp1a (NACHT, LRR and PYD domains-containing protein 1a, N-terminus), preventing activation of the Nlrp1a inflammasome. In response to pathogen-associated signals, the N-terminal part of Nlrp1a is degraded by the proteasome, releasing this form, which polymerizes to form the Nlrp1a inflammasome complex: the Nlrp1a inflammasome complex then directly recruits pro-caspase-1 (proCASP1) and promotes caspase-1 (CASP1) activation, leading to gasdermin-D (GSDMD) cleavage and subsequent pyroptosis. This Rattus norvegicus (Rat) protein is NACHT, LRR and PYD domains-containing protein 1a allele 3.